A 264-amino-acid polypeptide reads, in one-letter code: Hemin import ATP-binding protein HmuV (264 aa).

In terms of domain architecture, ABC transporter spans 2–241 (IEVSGVSVRL…ETMLAVFGCA (240 aa)). 34–41 (GPNGSGKT) serves as a coordination point for ATP.

It belongs to the ABC transporter superfamily. Heme (hemin) importer (TC 3.A.1.14.5) family. In terms of assembly, the complex is composed of two ATP-binding proteins (HmuV), two transmembrane proteins (HmuU) and a solute-binding protein (HmuT).

It is found in the cell inner membrane. Functionally, part of the ABC transporter complex HmuTUV involved in hemin import. Responsible for energy coupling to the transport system. In Rhizobium johnstonii (strain DSM 114642 / LMG 32736 / 3841) (Rhizobium leguminosarum bv. viciae), this protein is Hemin import ATP-binding protein HmuV.